A 219-amino-acid chain; its full sequence is Thiopurine S-methyltransferase (219 aa).

Residues Trp10, Leu45, Glu66, and Arg123 each contribute to the S-adenosyl-L-methionine site.

Belongs to the class I-like SAM-binding methyltransferase superfamily. TPMT family.

The protein localises to the cytoplasm. The catalysed reaction is S-adenosyl-L-methionine + a thiopurine = S-adenosyl-L-homocysteine + a thiopurine S-methylether.. The sequence is that of Thiopurine S-methyltransferase from Shewanella frigidimarina (strain NCIMB 400).